A 1405-amino-acid chain; its full sequence is DNA-directed RNA polymerase subunit beta' (1405 aa).

Residues Cys70, Cys72, Cys85, and Cys88 each contribute to the Zn(2+) site. Residues Asp460, Asp462, and Asp464 each contribute to the Mg(2+) site. 4 residues coordinate Zn(2+): Cys815, Cys890, Cys897, and Cys900.

Belongs to the RNA polymerase beta' chain family. In terms of assembly, the RNAP catalytic core consists of 2 alpha, 1 beta, 1 beta' and 1 omega subunit. When a sigma factor is associated with the core the holoenzyme is formed, which can initiate transcription. It depends on Mg(2+) as a cofactor. Zn(2+) serves as cofactor.

It carries out the reaction RNA(n) + a ribonucleoside 5'-triphosphate = RNA(n+1) + diphosphate. Its function is as follows. DNA-dependent RNA polymerase catalyzes the transcription of DNA into RNA using the four ribonucleoside triphosphates as substrates. This is DNA-directed RNA polymerase subunit beta' from Xanthomonas campestris pv. campestris (strain 8004).